The primary structure comprises 1372 residues: DNA-directed RNA polymerase subunit beta' (1372 aa).

Zn(2+) is bound by residues C69, C71, C84, and C87. Residues D460, D462, and D464 each contribute to the Mg(2+) site. C808, C882, C889, and C892 together coordinate Zn(2+).

This sequence belongs to the RNA polymerase beta' chain family. In terms of assembly, the RNAP catalytic core consists of 2 alpha, 1 beta, 1 beta' and 1 omega subunit. When a sigma factor is associated with the core the holoenzyme is formed, which can initiate transcription. It depends on Mg(2+) as a cofactor. Zn(2+) is required as a cofactor.

It catalyses the reaction RNA(n) + a ribonucleoside 5'-triphosphate = RNA(n+1) + diphosphate. Functionally, DNA-dependent RNA polymerase catalyzes the transcription of DNA into RNA using the four ribonucleoside triphosphates as substrates. The protein is DNA-directed RNA polymerase subunit beta' of Rickettsia prowazekii (strain Madrid E).